The sequence spans 211 residues: Arginine exporter protein ArgO (211 aa).

Transmembrane regions (helical) follow at residues 1–21 (MISY…PLGP), 37–57 (LMIA…GIFG), 68–88 (LLAL…LGAL), 111–131 (IIAT…DTFV), 147–167 (WFAL…ALLA), and 179–199 (AQRI…FQLA).

It belongs to the LysE/ArgO transporter (TC 2.A.75) family.

It localises to the cell inner membrane. It catalyses the reaction L-arginine(in) = L-arginine(out). Functionally, involved in the export of arginine. Important to control the intracellular level of arginine and the correct balance between arginine and lysine. In Salmonella enteritidis PT4 (strain P125109), this protein is Arginine exporter protein ArgO.